The following is a 1214-amino-acid chain: Zinc finger E-box-binding homeobox 2 (1214 aa).

A disordered region spans residues 1-101; that stretch reads MKQPIMADGP…GVEHPWHNNE (101 aa). A compositionally biased stretch (basic residues) spans 12 to 24; it reads CKRRKQANPRRKN. A compositionally biased stretch (polar residues) spans 57–74; sequence DQETSPASVPNHESSPHV. Positions 89–98 are enriched in basic and acidic residues; that stretch reads REGGVEHPWH. Serine 142 is subject to Phosphoserine. C2H2-type zinc fingers lie at residues 211 to 234, 241 to 263, and 282 to 304; these read LTCP…KYRH, FSCP…MVTH, and FKCT…LRIH. The segment at 310-334 adopts a C2H2-type 4; atypical zinc-finger fold; sequence YECPNCKKRFSHSGSYSSHISSKKC. 3 positions are modified to phosphoserine: serine 356, serine 360, and serine 364. Lysine 377 carries the post-translational modification N6-acetyllysine. Lysine 391 participates in a covalent cross-link: Glycyl lysine isopeptide (Lys-Gly) (interchain with G-Cter in SUMO); alternate. Residue lysine 391 forms a Glycyl lysine isopeptide (Lys-Gly) (interchain with G-Cter in SUMO2); alternate linkage. The tract at residues 437–487 is SMAD-MH2 binding domain; sequence QHLGVGMEAPLLGFPTMNSNLSEVQKVLQIVDNTVSRQKMDCKAEEISKLK. Glycyl lysine isopeptide (Lys-Gly) (interchain with G-Cter in SUMO2) cross-links involve residues lysine 479 and lysine 555. A C2H2-type 5; atypical zinc finger spans residues 581–605; that stretch reads FSCQFCKESFPGPIPLHQHERYLCK. Residues lysine 611 and lysine 632 each participate in a glycyl lysine isopeptide (Lys-Gly) (interchain with G-Cter in SUMO2) cross-link. A DNA-binding region (homeobox; atypical) is located at residues 644-703; the sequence is GMTSPINPYKDHMSVLKAYYAMNMEPNSDELLKISIAVGLPQEFVKEWFEQRKVYQYSNS. At serine 647 the chain carries Phosphoserine. Residues 702–715 are compositionally biased toward low complexity; sequence NSRSPSLERSSKPL. 3 disordered regions span residues 702 to 740, 771 to 810, and 832 to 857; these read NSRS…DSIT, PVEK…SSEE, and ATKN…ENSD. Residue lysine 713 forms a Glycyl lysine isopeptide (Lys-Gly) (interchain with G-Cter in SUMO2) linkage. A phosphoserine mark is found at serine 731 and serine 780. 2 stretches are compositionally biased toward low complexity: residues 780–808 and 840–854; these read SNTP…SFSS and SSIS…SSSE. Phosphothreonine is present on threonine 782. Serine 784 bears the Phosphoserine mark. Lysine 866 is covalently cross-linked (Glycyl lysine isopeptide (Lys-Gly) (interchain with G-Cter in SUMO); alternate). Lysine 866 is covalently cross-linked (Glycyl lysine isopeptide (Lys-Gly) (interchain with G-Cter in SUMO2); alternate). 2 consecutive C2H2-type zinc fingers follow at residues 999–1021 and 1027–1049; these read YACD…KYEH and HQCQ…SRLH. Residues 1055-1076 form a C2H2-type 8; atypical zinc finger; it reads YQCDKCGKRFSHSGSYSQHMNH. Residues 1117–1214 are disordered; the sequence is TPQGYSDSEE…HEEDNMEDGM (98 aa). 2 positions are modified to phosphoserine: serine 1122 and serine 1124. Residues 1127 to 1155 show a composition bias toward basic and acidic residues; the sequence is RESMPRDGESEKEHEKEGEDGYGKLGRQD. A compositionally biased stretch (acidic residues) spans 1156-1167; sequence GDEEFEEEEEES. 2 stretches are compositionally biased toward basic and acidic residues: residues 1168–1179 and 1186–1205; these read ENKSMDTDPETI and GDHS…KSDH. Residue serine 1203 is modified to Phosphoserine.

Belongs to the delta-EF1/ZFH-1 C2H2-type zinc-finger family. Binds activated SMAD1, activated SMAD2 and activated SMAD3; binding with SMAD4 is not detected. Interacts with CBX4 and CTBP1. Post-translationally, sumoylation on Lys-391 and Lys-866 is promoted by the E3 SUMO-protein ligase CBX4, and impairs interaction with CTBP1 and transcription repression activity.

The protein resides in the nucleus. Its subcellular location is the chromosome. Its function is as follows. Transcriptional inhibitor that binds to DNA sequence 5'-CACCT-3' in different promoters. Represses transcription of E-cadherin. Represses expression of MEOX2. The polypeptide is Zinc finger E-box-binding homeobox 2 (Homo sapiens (Human)).